We begin with the raw amino-acid sequence, 418 residues long: Arginine deiminase (418 aa).

The Amidino-cysteine intermediate role is filled by Cys406.

It belongs to the arginine deiminase family.

The protein localises to the cytoplasm. It carries out the reaction L-arginine + H2O = L-citrulline + NH4(+). Its pathway is amino-acid degradation; L-arginine degradation via ADI pathway; carbamoyl phosphate from L-arginine: step 1/2. In Lentilactobacillus hilgardii (Lactobacillus hilgardii), this protein is Arginine deiminase.